The sequence spans 213 residues: RxLR effector protein PexRD1 (213 aa).

An N-terminal signal peptide occupies residues 1–19 (MRACNTLLPTAIVLTSCDA). Residues 50-77 (RQLRGFYATENTDPVNNQDTAHEDGEER) carry the RxLR-dEER motif.

The protein belongs to the RxLR effector family.

Its subcellular location is the secreted. The protein localises to the host nucleus. In terms of biological role, effector that enhances P.infestans colonization of Nicotiana benthamiana leaves. This is RxLR effector protein PexRD1 from Phytophthora infestans (strain T30-4) (Potato late blight agent).